A 69-amino-acid polypeptide reads, in one-letter code: uncharacterized protein (69 aa).

The tract at residues 21–42 is disordered; it reads MYAANKKSDARRRGKVGKEQWE. Residues 35 to 69 are a coiled coil; the sequence is KVGKEQWEKEMEQYNIQKAQFEKELKEKKEKELKK.

This is an uncharacterized protein from Acheta domesticus (House cricket).